The sequence spans 553 residues: Methyl-coenzyme M reductase subunit alpha (553 aa).

Residue glutamine 151 coordinates coenzyme F430. Coenzyme B contacts are provided by residues arginine 229, 260-261, and arginine 274; that span reads KH. Residues tyrosine 336 and tyrosine 447 each contribute to the coenzyme M site.

Belongs to the methyl-coenzyme M reductase alpha subunit family. In terms of assembly, MCR is a hexamer of two alpha, two beta, and two gamma chains, forming a dimer of heterotrimers. The cofactor is coenzyme F430.

The protein localises to the cytoplasm. It carries out the reaction coenzyme B + methyl-coenzyme M = methane + coenzyme M-coenzyme B heterodisulfide. Its pathway is one-carbon metabolism; methyl-coenzyme M reduction; methane from methyl-coenzyme M: step 1/1. Functionally, component of the methyl-coenzyme M reductase (MCR) I that catalyzes the reductive cleavage of methyl-coenzyme M (CoM-S-CH3 or 2-(methylthio)ethanesulfonate) using coenzyme B (CoB or 7-mercaptoheptanoylthreonine phosphate) as reductant which results in the production of methane and the mixed heterodisulfide of CoB and CoM (CoM-S-S-CoB). This is the final step in methanogenesis. In Methanococcus vannielii, this protein is Methyl-coenzyme M reductase subunit alpha (mcrA).